We begin with the raw amino-acid sequence, 491 residues long: Cytochrome P450 2F3 (491 aa).

Cys436 contributes to the heme binding site.

This sequence belongs to the cytochrome P450 family. It depends on heme as a cofactor. In terms of tissue distribution, lung specific.

Its subcellular location is the endoplasmic reticulum membrane. The protein resides in the microsome membrane. It carries out the reaction an organic molecule + reduced [NADPH--hemoprotein reductase] + O2 = an alcohol + oxidized [NADPH--hemoprotein reductase] + H2O + H(+). Its function is as follows. Bioactivates 3-methylindole (3MI) by dehydrogenation to the putative electrophile 3-methylene-indolenine. Stereoselectively catalyzes the formation of the 1R,2S-oxide from naphthalene. Lack activity with other common P450 substrates including 7-ethoxycoumarin. The polypeptide is Cytochrome P450 2F3 (CYP2F3) (Capra hircus (Goat)).